Here is a 389-residue protein sequence, read N- to C-terminus: NADH-quinone oxidoreductase subunit D (389 aa).

Belongs to the complex I 49 kDa subunit family. As to quaternary structure, NDH-1 is composed of 14 different subunits. Subunits NuoB, C, D, E, F, and G constitute the peripheral sector of the complex.

The protein resides in the cell inner membrane. The catalysed reaction is a quinone + NADH + 5 H(+)(in) = a quinol + NAD(+) + 4 H(+)(out). Its function is as follows. NDH-1 shuttles electrons from NADH, via FMN and iron-sulfur (Fe-S) centers, to quinones in the respiratory chain. The immediate electron acceptor for the enzyme in this species is believed to be ubiquinone. Couples the redox reaction to proton translocation (for every two electrons transferred, four hydrogen ions are translocated across the cytoplasmic membrane), and thus conserves the redox energy in a proton gradient. The sequence is that of NADH-quinone oxidoreductase subunit D from Rickettsia prowazekii (strain Madrid E).